The chain runs to 573 residues: Proline--tRNA ligase (573 aa).

This sequence belongs to the class-II aminoacyl-tRNA synthetase family. ProS type 1 subfamily. Homodimer.

It localises to the cytoplasm. The enzyme catalyses tRNA(Pro) + L-proline + ATP = L-prolyl-tRNA(Pro) + AMP + diphosphate. Its function is as follows. Catalyzes the attachment of proline to tRNA(Pro) in a two-step reaction: proline is first activated by ATP to form Pro-AMP and then transferred to the acceptor end of tRNA(Pro). As ProRS can inadvertently accommodate and process non-cognate amino acids such as alanine and cysteine, to avoid such errors it has two additional distinct editing activities against alanine. One activity is designated as 'pretransfer' editing and involves the tRNA(Pro)-independent hydrolysis of activated Ala-AMP. The other activity is designated 'posttransfer' editing and involves deacylation of mischarged Ala-tRNA(Pro). The misacylated Cys-tRNA(Pro) is not edited by ProRS. This chain is Proline--tRNA ligase, found in Caldanaerobacter subterraneus subsp. tengcongensis (strain DSM 15242 / JCM 11007 / NBRC 100824 / MB4) (Thermoanaerobacter tengcongensis).